The primary structure comprises 889 residues: Rho GTPase-activating protein 27 (889 aa).

In terms of domain architecture, SH3 spans 6–69 (VGDVYVLVEH…PAQYVRELPA (64 aa)). Positions 104–132 (AGPDGAPEESGGRASSLCGPAQRGAATQR) are disordered. Phosphoserine occurs at positions 156, 216, and 249. WW domains lie at 246-280 (PLPSPVWETHTDAGTGRPYYYNPDTGVTTWESPFE) and 299-333 (VSLETEWGQYWDEESRRVFFYNPLTGETAWEDEAE). Residues 329-341 (EDEAENEPEEELE) are compositionally biased toward acidic residues. A disordered region spans residues 329 to 397 (EDEAENEPEE…SPLTTPPGWS (69 aa)). S347 is subject to Phosphoserine. Residues 383-395 (EPGPTSPLTTPPG) are compositionally biased toward low complexity. Residues 411-444 (HFTQEQWVRLEDPHGKPYFYNPEDSSVRWELPQV) enclose the WW 3 domain. The disordered stretch occupies residues 447-474 (PAPRSIHKSSQDGDTPAQASPPEEKVPA). Phosphoserine is present on S456. The residue at position 461 (T461) is a Phosphothreonine. Position 466 is a phosphoserine (S466). Residues 496–612 (TLDKAGVLHR…WHKAIAQGIQ (117 aa)) form the PH domain. The disordered stretch occupies residues 617–655 (ELPPEESESSRVDFGSSERLGSWQEKEEDARPNAAAPAL). Positions 697 to 886 (CALAALCERE…LILQQCADIF (190 aa)) constitute a Rho-GAP domain.

In terms of assembly, interacts with SH3KBP1/CIN85. In terms of tissue distribution, expressed in germinal center B-cell, spleen, chronic lymphocytic leukemia, pancreatic cancer and lung cancer.

The protein resides in the cytoplasm. Its subcellular location is the membrane. Rho GTPase-activating protein which may be involved in clathrin-mediated endocytosis. GTPase activators for the Rho-type GTPases act by converting them to an inactive GDP-bound state. Has activity toward CDC42 and RAC1. The sequence is that of Rho GTPase-activating protein 27 from Homo sapiens (Human).